The primary structure comprises 299 residues: Streptogrisin-B (299 aa).

The first 38 residues, 1–38 (MRIKRTSNRSNAARRVRTTAVLAGLAAVAALAVPTANA), serve as a signal peptide directing secretion. Residues 39–114 (ETPRTFSANQ…ERTPGKFTKL (76 aa)) constitute a propeptide that is removed on maturation. A disulfide bridge connects residues cysteine 128 and cysteine 148. Residues histidine 147, aspartate 177, and serine 255 each act as charge relay system in the active site. An intrachain disulfide couples cysteine 249 to cysteine 276.

Belongs to the peptidase S1 family. As to quaternary structure, monomer.

It carries out the reaction Hydrolysis of proteins with trypsin-like specificity.. Its function is as follows. Has a primary specificity for large aliphatic or aromatic amino acids. In Streptomyces griseus, this protein is Streptogrisin-B (sprB).